A 150-amino-acid polypeptide reads, in one-letter code: Protein NrdI (150 aa).

This sequence belongs to the NrdI family.

In terms of biological role, probably involved in ribonucleotide reductase function. The protein is Protein NrdI of Mycobacterium avium (strain 104).